The primary structure comprises 142 residues: Hemoglobin subunit alpha-3 (142 aa).

The Globin domain maps to 2–142 (TLTDSDKAAV…VATVLTSKYR (141 aa)). An O2-binding site is contributed by His59. His88 serves as a coordination point for heme b.

This sequence belongs to the globin family. In terms of assembly, heterotetramer of two alpha chains and two beta chains. In terms of tissue distribution, red blood cells.

In terms of biological role, this is a larval (tadpole) alpha-globin. This Xenopus laevis (African clawed frog) protein is Hemoglobin subunit alpha-3 (hba3).